The following is a 478-amino-acid chain: BUB3-interacting and GLEBS motif-containing protein ZNF207 (478 aa).

The tract at residues 1–92 is microtubule-binding region; that stretch reads MGRKKKKQLK…EGIPEKDMDE (92 aa). C2H2-type zinc fingers lie at residues 11-34 and 35-58; these read PWCWYCNRDFDDEKILIQHQKAKH and FKCHICHKKLYTGPGLAIHCMQVH. Residues 99-111 show a composition bias toward basic and acidic residues; sequence QKTQESQKKKQQD. Disordered stretches follow at residues 99–157, 238–276, 300–362, and 384–478; these read QKTQ…PGMP, APTATVPAPQPPVTKPLFPSAGQMGTPVTSSSTASSNSE, VGTD…ATSK, and RNLP…GGRY. Acidic residues predominate over residues 112–121; sequence DSDEYDDDDS. Positions 127–136 are enriched in polar residues; sequence FQPQPVQPQQ. Residues 142 to 157 are compositionally biased toward pro residues; it reads MAQPGLPPVPGAPGMP. 3 stretches are compositionally biased toward low complexity: residues 267–276, 310–362, and 433–446; these read SSSTASSNSE, TPAT…ATSK, and QGMPGYLPGAMPPY. Positions 359–391 are GLEBS; sequence ATSKLIHPDEDISLEERRAQLPKYQRNLPRPGQ. Over residues 447 to 467 the composition is skewed to pro residues; sequence GQGPPMVPPYQGGPPRPPMGM.

As to quaternary structure, interacts (via GLEBS region) with BUB3. In terms of tissue distribution, ubiquitous.

The protein resides in the nucleus. The protein localises to the chromosome. It localises to the centromere. It is found in the kinetochore. Its subcellular location is the cytoplasm. The protein resides in the cytoskeleton. The protein localises to the spindle. Kinetochore- and microtubule-binding protein that plays a key role in spindle assembly. ZNF207/BuGZ is mainly composed of disordered low-complexity regions and undergoes phase transition or coacervation to form temperature-dependent liquid droplets. Coacervation promotes microtubule bundling and concentrates tubulin, promoting microtubule polymerization and assembly of spindle and spindle matrix by concentrating its building blocks. Also acts as a regulator of mitotic chromosome alignment by mediating the stability and kinetochore loading of BUB3. Mechanisms by which BUB3 is protected are unclear: according to a first report, ZNF207/BuGZ may act by blocking ubiquitination and proteasomal degradation of BUB3. According to another report, the stabilization is independent of the proteasome. The protein is BUB3-interacting and GLEBS motif-containing protein ZNF207 of Homo sapiens (Human).